A 356-amino-acid polypeptide reads, in one-letter code: Glutamine synthetase cytosolic isozyme (356 aa).

A GS beta-grasp domain is found at 19-99 (IIAEYIWIGG…VMCDAYTPAG (81 aa)). The interval 38-66 (RTLPGPVTDPSQLPKWNYDGSSTGQAPGE) is disordered. The 251-residue stretch at 106–356 (KRHAAAKIFS…IADTTILWKP (251 aa)) folds into the GS catalytic domain.

Belongs to the glutamine synthetase family. Homooctamer.

It localises to the cytoplasm. It catalyses the reaction L-glutamate + NH4(+) + ATP = L-glutamine + ADP + phosphate + H(+). The protein is Glutamine synthetase cytosolic isozyme of Medicago sativa (Alfalfa).